Here is a 321-residue protein sequence, read N- to C-terminus: uncharacterized protein (321 aa).

Residue tyrosine 60 is the Proton donor of the active site. Histidine 118 contributes to the substrate binding site.

This sequence belongs to the aldo/keto reductase family.

This is an uncharacterized protein from Schizosaccharomyces pombe (strain 972 / ATCC 24843) (Fission yeast).